We begin with the raw amino-acid sequence, 360 residues long: Protein phosphatase 1 regulatory subunit 7 (360 aa).

The disordered stretch occupies residues Met1 to His63. The residue at position 2 (Ala2) is an N-acetylalanine. Phosphoserine occurs at positions 12, 24, 27, 44, and 47. The span at Glu17–Lys34 shows a compositional bias: basic and acidic residues. LRR repeat units follow at residues Asp77 to Lys98, Lys99 to Gln120, Ser121 to Thr142, Glu143 to Thr164, Gln165 to Gln186, Gln187 to Thr208, Asn209 to Ser230, Asn231 to Val252, Asn253 to Asn274, Lys275 to Thr296, and Glu297 to Lys318. Ser322 is modified (phosphoserine). The 30-residue stretch at Asn331–Phe360 folds into the LRRCT domain.

This sequence belongs to the SDS22 family. As to quaternary structure, interacts with PPP1CA, PPP1CB and PPP1CC/PPP1G.

Its subcellular location is the nucleus. Its function is as follows. Regulatory subunit of protein phosphatase 1. In Rattus norvegicus (Rat), this protein is Protein phosphatase 1 regulatory subunit 7 (Ppp1r7).